The primary structure comprises 784 residues: Replication protein A 70 kDa DNA-binding subunit E (784 aa).

Residues 114-224 form a disordered region; sequence HPVPGGKHND…NRGPVARNEA (111 aa). Composition is skewed to polar residues over residues 132-148 and 167-190; these read KFNT…QVNN and SSVP…NGVT. A DNA-binding region (OB) is located at residues 241-327; that stretch reads WTIKARVTNK…RNDYEIMLDN (87 aa). A C4-type zinc finger spans residues 532 to 558; the sequence is CPIMNGDRPCSKKVTDNGDGTWRCEKC. Disordered stretches follow at residues 678-707 and 746-784; these read LPIN…PSSV and AKCP…VGSY. A compositionally biased stretch (polar residues) spans 695–707; it reads GIGSSGTRDPSSV. A compositionally biased stretch (gly residues) spans 760-776; the sequence is YMGGSYRGTTGSYGGGL.

The protein belongs to the replication factor A protein 1 family. As to quaternary structure, heterotrimer of RPA1, RPA2 and RPA3 (canonical replication protein A complex).

The protein resides in the nucleus. Its function is as follows. Component of the replication protein A complex (RPA) required for DNA recombination, repair and replication. The activity of RPA is mediated by single-stranded DNA binding and protein interactions. Probably involved in repair of double-strand DNA breaks (DSBs) induced by genotoxic stresses. The polypeptide is Replication protein A 70 kDa DNA-binding subunit E (RPA1E) (Arabidopsis thaliana (Mouse-ear cress)).